Here is a 177-residue protein sequence, read N- to C-terminus: Large ribosomal subunit protein uL6 (177 aa).

It belongs to the universal ribosomal protein uL6 family. Part of the 50S ribosomal subunit.

Its function is as follows. This protein binds to the 23S rRNA, and is important in its secondary structure. It is located near the subunit interface in the base of the L7/L12 stalk, and near the tRNA binding site of the peptidyltransferase center. The polypeptide is Large ribosomal subunit protein uL6 (Vibrio vulnificus (strain CMCP6)).